The primary structure comprises 266 residues: MTKIAVCGAAGRMGQRIIVAAREAGCTISGALERPGHEMVGQDAGLIAGCGALGVAISDDLNAVVEGCDVLIDFTTPKVSLKNLEVCALKKKSIVIGSTGFTPEERALAVELAREIPAVLAPNMSVGVNVCFKILKDVAKTLGDDFDVEIVELHHNKKKDAPSGTAVRMGEVVAEALGRDYNKVATYHREGICGERTKEEIGMQTVRGGDIVGEHTVYFIGMGERIEISHRAMTRDMFSRGSVRAAQWVVGKAPGLYDMQDVLGLK.

Residues 8–13 (GAAGRM) and Glu33 contribute to the NAD(+) site. Arg34 contributes to the NADP(+) binding site. NAD(+) is bound by residues 97 to 99 (GST) and 121 to 124 (APNM). The active-site Proton donor/acceptor is the His154. A (S)-2,3,4,5-tetrahydrodipicolinate-binding site is contributed by His155. The active-site Proton donor is the Lys158. 164 to 165 (GT) is a (S)-2,3,4,5-tetrahydrodipicolinate binding site.

The protein belongs to the DapB family.

It localises to the cytoplasm. It carries out the reaction (S)-2,3,4,5-tetrahydrodipicolinate + NAD(+) + H2O = (2S,4S)-4-hydroxy-2,3,4,5-tetrahydrodipicolinate + NADH + H(+). The catalysed reaction is (S)-2,3,4,5-tetrahydrodipicolinate + NADP(+) + H2O = (2S,4S)-4-hydroxy-2,3,4,5-tetrahydrodipicolinate + NADPH + H(+). The protein operates within amino-acid biosynthesis; L-lysine biosynthesis via DAP pathway; (S)-tetrahydrodipicolinate from L-aspartate: step 4/4. Its function is as follows. Catalyzes the conversion of 4-hydroxy-tetrahydrodipicolinate (HTPA) to tetrahydrodipicolinate. The protein is 4-hydroxy-tetrahydrodipicolinate reductase of Geobacter sulfurreducens (strain ATCC 51573 / DSM 12127 / PCA).